The chain runs to 483 residues: Glycogen synthase (483 aa).

Position 15 (lysine 15) interacts with ADP-alpha-D-glucose.

Belongs to the glycosyltransferase 1 family. Bacterial/plant glycogen synthase subfamily.

It carries out the reaction [(1-&gt;4)-alpha-D-glucosyl](n) + ADP-alpha-D-glucose = [(1-&gt;4)-alpha-D-glucosyl](n+1) + ADP + H(+). Its pathway is glycan biosynthesis; glycogen biosynthesis. Functionally, synthesizes alpha-1,4-glucan chains using ADP-glucose. This Petrotoga mobilis (strain DSM 10674 / SJ95) protein is Glycogen synthase.